We begin with the raw amino-acid sequence, 809 residues long: G-type lectin S-receptor-like serine/threonine-protein kinase At1g61480 (809 aa).

A signal peptide spans 1–24; sequence MGKKRIMFFASLLLITIFLSFSYA. The region spanning 25–144 is the Bulb-type lectin domain; sequence GITRESPLSI…NSGRTLWESF (120 aa). Over 25–425 the chain is Extracellular; sequence GITRESPLSI…SELGGNKRNK (401 aa). N-linked (GlcNAc...) asparagine glycosylation is found at asparagine 53, asparagine 88, asparagine 94, asparagine 103, asparagine 117, asparagine 134, and asparagine 236. The region spanning 278–314 is the EGF-like domain; sequence PENSCDIYGFCGPFGICVMSVPPKCKCFKGFVPKSIE. 2 disulfides stabilise this stretch: cysteine 282–cysteine 294 and cysteine 288–cysteine 302. N-linked (GlcNAc...) asparagine glycans are attached at residues asparagine 320 and asparagine 375. Positions 333–415 constitute a PAN domain; that stretch reads CQGNTNGKTV…GEILSIRLAS (83 aa). 2 cysteine pairs are disulfide-bonded: cysteine 368/cysteine 389 and cysteine 372/cysteine 378. Residues 426–446 traverse the membrane as a helical segment; sequence IIVASIVSLSLFVILAFAAFC. Over 447 to 809 the chain is Cytoplasmic; the sequence is FLRYKVKHTV…EMTQSVILGR (363 aa). The Protein kinase domain occupies 496 to 781; it reads FSLSNKLGQG…DLTSPKQPTF (286 aa). ATP is bound by residues 502-510 and lysine 524; that span reads LGQGGFGSV. 2 positions are modified to phosphoserine: serine 530 and serine 545. Residues 585–602 form a caM-binding region; it reads RKRLEIDWPKRFNIIEGI. Aspartate 621 serves as the catalytic Proton acceptor. A phosphoserine mark is found at serine 625 and serine 638. Threonine 655 carries the phosphothreonine modification. A phosphoserine mark is found at serine 698 and serine 792.

Belongs to the protein kinase superfamily. Ser/Thr protein kinase family.

It localises to the cell membrane. It catalyses the reaction L-seryl-[protein] + ATP = O-phospho-L-seryl-[protein] + ADP + H(+). It carries out the reaction L-threonyl-[protein] + ATP = O-phospho-L-threonyl-[protein] + ADP + H(+). The protein is G-type lectin S-receptor-like serine/threonine-protein kinase At1g61480 of Arabidopsis thaliana (Mouse-ear cress).